Consider the following 96-residue polypeptide: Small ribosomal subunit protein bS6 (96 aa).

Belongs to the bacterial ribosomal protein bS6 family.

Binds together with bS18 to 16S ribosomal RNA. This chain is Small ribosomal subunit protein bS6, found in Corynebacterium aurimucosum (strain ATCC 700975 / DSM 44827 / CIP 107346 / CN-1) (Corynebacterium nigricans).